The chain runs to 247 residues: Pyridoxine 5'-phosphate synthase (247 aa).

Asparagine 12 lines the 3-amino-2-oxopropyl phosphate pocket. Residue aspartate 14 to histidine 15 coordinates 1-deoxy-D-xylulose 5-phosphate. Residue arginine 23 participates in 3-amino-2-oxopropyl phosphate binding. Histidine 48 acts as the Proton acceptor in catalysis. 2 residues coordinate 1-deoxy-D-xylulose 5-phosphate: arginine 50 and histidine 55. Residue glutamate 75 is the Proton acceptor of the active site. Residue threonine 105 coordinates 1-deoxy-D-xylulose 5-phosphate. Histidine 196 (proton donor) is an active-site residue. Residues glycine 197 and glycine 218–histidine 219 contribute to the 3-amino-2-oxopropyl phosphate site.

It belongs to the PNP synthase family. As to quaternary structure, homooctamer; tetramer of dimers.

The protein resides in the cytoplasm. The catalysed reaction is 3-amino-2-oxopropyl phosphate + 1-deoxy-D-xylulose 5-phosphate = pyridoxine 5'-phosphate + phosphate + 2 H2O + H(+). It functions in the pathway cofactor biosynthesis; pyridoxine 5'-phosphate biosynthesis; pyridoxine 5'-phosphate from D-erythrose 4-phosphate: step 5/5. Catalyzes the complicated ring closure reaction between the two acyclic compounds 1-deoxy-D-xylulose-5-phosphate (DXP) and 3-amino-2-oxopropyl phosphate (1-amino-acetone-3-phosphate or AAP) to form pyridoxine 5'-phosphate (PNP) and inorganic phosphate. The chain is Pyridoxine 5'-phosphate synthase from Pseudomonas fluorescens (strain SBW25).